The sequence spans 779 residues: Protein WEAK CHLOROPLAST MOVEMENT UNDER BLUE LIGHT-like 1 (779 aa).

The disordered stretch occupies residues 1-119; the sequence is MEDLKTTDAL…NAVSPRPLYS (119 aa). Positions 79–88 are enriched in polar residues; sequence DSPTTPSFVS. Ser-139 bears the Phosphoserine mark. Coiled-coil stretches lie at residues 182-503, 532-587, and 657-715; these read RMKV…KQRE, KETR…ESRL, and AVSE…KWRE. Residues 650–661 show a composition bias toward low complexity; that stretch reads ANARVAAAVSEV. Disordered stretches follow at residues 650-674 and 694-759; these read ANAR…SLEK and EKAE…NPVK. Composition is skewed to basic and acidic residues over residues 662-674 and 694-718; these read GEAK…SLEK and EKAE…EVSE. Over residues 741–753 the composition is skewed to polar residues; it reads TSVSNETETNPIP.

This sequence belongs to the WEB family.

This is Protein WEAK CHLOROPLAST MOVEMENT UNDER BLUE LIGHT-like 1 (WEL1) from Arabidopsis thaliana (Mouse-ear cress).